Here is a 282-residue protein sequence, read N- to C-terminus: Pantothenate synthetase (282 aa).

30 to 37 (MGNLHQGH) is a binding site for ATP. H37 functions as the Proton donor in the catalytic mechanism. Q61 provides a ligand contact to (R)-pantoate. Q61 serves as a coordination point for beta-alanine. 149–152 (GKKD) contributes to the ATP binding site. Q155 lines the (R)-pantoate pocket. ATP is bound by residues I178 and 186-189 (MSSR).

This sequence belongs to the pantothenate synthetase family. Homodimer.

The protein localises to the cytoplasm. The catalysed reaction is (R)-pantoate + beta-alanine + ATP = (R)-pantothenate + AMP + diphosphate + H(+). The protein operates within cofactor biosynthesis; (R)-pantothenate biosynthesis; (R)-pantothenate from (R)-pantoate and beta-alanine: step 1/1. Its function is as follows. Catalyzes the condensation of pantoate with beta-alanine in an ATP-dependent reaction via a pantoyl-adenylate intermediate. In Shewanella loihica (strain ATCC BAA-1088 / PV-4), this protein is Pantothenate synthetase.